Reading from the N-terminus, the 558-residue chain is Putative F-box/LRR-repeat protein R542 (558 aa).

An F-box domain is found at 1–47 (MLLNLPYEILLIIFSLIESKKFFKLLSINKEVREFILTMLNQNPKSF). LRR repeat units lie at residues 73–105 (KSTINDDQLKYLSDVYSLNISNCKSITDRGLSF), 139–176 (CGKITDKGIENLVYGKTLNSDEPIPTVINTIRKINLQC), 177–220 (CMRI…KIDG), 251–284 (LDKLTKLILPNVPEHIEYIDFNKMPNLVKADLSG), 285–317 (CINLLDEQLKGLSKVRKLNLKECYDITDVGLSY), 329–361 (CFRITDSGLKYLSNADYVNICGCLKITNEGFFY), 369–395 (VVGYTTLSLYDCMIDGCGDYEYLTISD), 420–444 (CNNIIDVDLKSFTNLPTLSKIDLRY), 445–477 (CNNITNQGLSALCNIPIVKISNNYQISSKGISY), and 481–508 (SKKISIESCPKINSFPNLTGLKKLVFKT).

This Acanthamoeba polyphaga mimivirus (APMV) protein is Putative F-box/LRR-repeat protein R542.